A 593-amino-acid chain; its full sequence is Aspartate--tRNA(Asp/Asn) ligase (593 aa).

L-aspartate is bound at residue Glu172. Residues 196–199 (QLFK) form an aspartate region. Arg218 contributes to the L-aspartate binding site. ATP contacts are provided by residues 218-220 (RDE) and Gln227. His450 is an L-aspartate binding site. An ATP-binding site is contributed by Glu484. Position 491 (Arg491) interacts with L-aspartate. 536–539 (GLDR) contributes to the ATP binding site.

The protein belongs to the class-II aminoacyl-tRNA synthetase family. Type 1 subfamily. Homodimer.

The protein localises to the cytoplasm. The catalysed reaction is tRNA(Asx) + L-aspartate + ATP = L-aspartyl-tRNA(Asx) + AMP + diphosphate. Its function is as follows. Aspartyl-tRNA synthetase with relaxed tRNA specificity since it is able to aspartylate not only its cognate tRNA(Asp) but also tRNA(Asn). Reaction proceeds in two steps: L-aspartate is first activated by ATP to form Asp-AMP and then transferred to the acceptor end of tRNA(Asp/Asn). This Nitrosomonas eutropha (strain DSM 101675 / C91 / Nm57) protein is Aspartate--tRNA(Asp/Asn) ligase.